Consider the following 454-residue polypeptide: Bifunctional protein GlmU (454 aa).

Residues 1-233 are pyrophosphorylase; it reads MTNRTCLAVI…RESAVGINNR (233 aa). Residues 11–14, Lys25, Gln79, and 84–85 contribute to the UDP-N-acetyl-alpha-D-glucosamine site; these read LAAG and GT. Asp109 provides a ligand contact to Mg(2+). Residues Gly145, Glu159, Asn174, and Asn231 each coordinate UDP-N-acetyl-alpha-D-glucosamine. Asn231 contacts Mg(2+). A linker region spans residues 234-254; that stretch reads AELAEAEAVWQQKRRRELMLS. Residues 255-454 form an N-acetyltransferase region; it reads GVTLIAPETV…AEEKAKKSGG (200 aa). Arg320 and Lys338 together coordinate UDP-N-acetyl-alpha-D-glucosamine. The active-site Proton acceptor is the His350. UDP-N-acetyl-alpha-D-glucosamine is bound by residues Tyr353 and Asn364. Residues Ala367, 373–374, Ser410, and Arg427 each bind acetyl-CoA; that span reads NY.

In the N-terminal section; belongs to the N-acetylglucosamine-1-phosphate uridyltransferase family. This sequence in the C-terminal section; belongs to the transferase hexapeptide repeat family. As to quaternary structure, homotrimer. Mg(2+) serves as cofactor.

The protein resides in the cytoplasm. The enzyme catalyses alpha-D-glucosamine 1-phosphate + acetyl-CoA = N-acetyl-alpha-D-glucosamine 1-phosphate + CoA + H(+). It catalyses the reaction N-acetyl-alpha-D-glucosamine 1-phosphate + UTP + H(+) = UDP-N-acetyl-alpha-D-glucosamine + diphosphate. Its pathway is nucleotide-sugar biosynthesis; UDP-N-acetyl-alpha-D-glucosamine biosynthesis; N-acetyl-alpha-D-glucosamine 1-phosphate from alpha-D-glucosamine 6-phosphate (route II): step 2/2. It functions in the pathway nucleotide-sugar biosynthesis; UDP-N-acetyl-alpha-D-glucosamine biosynthesis; UDP-N-acetyl-alpha-D-glucosamine from N-acetyl-alpha-D-glucosamine 1-phosphate: step 1/1. It participates in bacterial outer membrane biogenesis; LPS lipid A biosynthesis. Functionally, catalyzes the last two sequential reactions in the de novo biosynthetic pathway for UDP-N-acetylglucosamine (UDP-GlcNAc). The C-terminal domain catalyzes the transfer of acetyl group from acetyl coenzyme A to glucosamine-1-phosphate (GlcN-1-P) to produce N-acetylglucosamine-1-phosphate (GlcNAc-1-P), which is converted into UDP-GlcNAc by the transfer of uridine 5-monophosphate (from uridine 5-triphosphate), a reaction catalyzed by the N-terminal domain. The sequence is that of Bifunctional protein GlmU from Chelativorans sp. (strain BNC1).